A 496-amino-acid chain; its full sequence is Autophagy-related protein 21 (496 aa).

The segment at 41-86 is disordered; that stretch reads SKKKTSNNNGSASNSESRNNEESILITNGSRDRTDAEEEEDNEDNA. A compositionally biased stretch (low complexity) spans 46 to 57; that stretch reads SNNNGSASNSES. Residues 75 to 84 show a composition bias toward acidic residues; the sequence is DAEEEEDNED. Position 213 is a phosphothreonine (Thr213). Ser237 bears the Phosphoserine mark. WD repeat units follow at residues 294–334, 346–385, and 448–488; these read VHKG…DYMS, TRLC…NSLP, and VNES…GECV. The short motif at 342-346 is the L/FRRG motif element; the sequence is FRRGT.

Belongs to the WD repeat PROPPIN family.

It localises to the cytoplasm. The protein resides in the vacuole. In terms of biological role, required for cytoplasm to vacuole transport (Cvt) vesicles formation and mitophagy. Involved in binding of phosphatidylethanolamine to ATG8 and in recruitment of ATG8 and ATG5 to the pre-autophagosomal structure. Protects ATG8 from ARG4-mediated cleavage. Essential for maturation of proaminopeptidase I. The protein is Autophagy-related protein 21 (ATG21) of Saccharomyces cerevisiae (strain ATCC 204508 / S288c) (Baker's yeast).